The primary structure comprises 183 residues: Oligoribonuclease (183 aa).

Residues 8–171 (LIWIDLEMTG…DDIRDSIHEL (164 aa)) enclose the Exonuclease domain. Tyrosine 129 is a catalytic residue.

The protein belongs to the oligoribonuclease family.

Its subcellular location is the cytoplasm. In terms of biological role, 3'-to-5' exoribonuclease specific for small oligoribonucleotides. This Halorhodospira halophila (strain DSM 244 / SL1) (Ectothiorhodospira halophila (strain DSM 244 / SL1)) protein is Oligoribonuclease.